We begin with the raw amino-acid sequence, 460 residues long: UDP-glucuronate 4-epimerase 6 (460 aa).

A run of 2 helical transmembrane segments spans residues 41-61 and 111-131; these read ATLL…PPLS and GLSV…SLAL. 113 to 144 contacts NAD(+); sequence SVLVTGAAGFVGSHCSLALRKRGDGVLGFDNF. The active-site Proton acceptor is the Tyr263.

Belongs to the NAD(P)-dependent epimerase/dehydratase family. In terms of assembly, homodimer. In terms of tissue distribution, in roots, leaf veins, siliques, flowers, pollen and stems.

The protein localises to the golgi apparatus. It is found in the golgi stack membrane. It carries out the reaction UDP-alpha-D-glucuronate = UDP-alpha-D-galacturonate. Its function is as follows. Involved in the synthesis of the negatively charged monosaccharide that forms the backbone of pectic cell wall components. This Arabidopsis thaliana (Mouse-ear cress) protein is UDP-glucuronate 4-epimerase 6 (GAE6).